A 273-amino-acid chain; its full sequence is Probable ribosomal RNA small subunit methyltransferase A (273 aa).

S-adenosyl-L-methionine contacts are provided by Asn23, Leu25, Gly50, Glu71, Asp95, and Asn110.

This sequence belongs to the class I-like SAM-binding methyltransferase superfamily. rRNA adenine N(6)-methyltransferase family. RsmA subfamily.

The protein resides in the cytoplasm. Functionally, specifically dimethylates two adjacent adenosines in the loop of a conserved hairpin near the 3'-end of 16S rRNA in the 30S particle. May play a critical role in biogenesis of 30S subunits. The protein is Probable ribosomal RNA small subunit methyltransferase A of Thermococcus sibiricus (strain DSM 12597 / MM 739).